A 475-amino-acid chain; its full sequence is MSPQTETKARVGFKAGVKDYRLTYYTPDYQPKDTDILAAFRMTPQPGVPPEEAGAAVAAESSTGTWTTVWTDGLTSLDRYKGRCYDIEPVPGEENQYIAYIAYPLDLFEEGSVTNLFTSIVGNVFGFKALRALRLEDLRIPPAYVKTFQGPPHGIQVERDKLNKYGRGLLGCTIKPKLGLSAKNYGRAVYECLRGGLDFTKDDENVNSQPFMRWRDRFLFVAEAIYKSQAETGEIKGHYLNATAATAEAMMQRAECAKDLGVPIIMHDYLTGGFTANTSLSHYCRDNGLLLHIHRAMHAVIDRQRNHGITFRVLAKALRLSGGDHLHSGTVVGKLEGEREVTLGFVDLMRDDYIEKDRSRGIYFTQDWVSLPGTMPVASGGIHVWHMPALVEIFGDDACLQFGGGTLGHPWGNAPGAAANRVALEACTQARNEGRDLAREGGDVIRAACKWSPELAAACEVWKEIKFEFETIDTL.

Residues 1–2 (MS) constitute a propeptide that is removed on maturation. Proline 3 carries the N-acetylproline modification. Lysine 14 bears the N6,N6,N6-trimethyllysine mark. Substrate is bound by residues asparagine 123 and threonine 173. Residue lysine 175 is the Proton acceptor of the active site. Lysine 177 lines the substrate pocket. Lysine 201, aspartate 203, and glutamate 204 together coordinate Mg(2+). N6-carboxylysine is present on lysine 201. Histidine 294 serves as the catalytic Proton acceptor. Substrate-binding residues include arginine 295, histidine 327, and serine 379.

It belongs to the RuBisCO large chain family. Type I subfamily. In terms of assembly, heterohexadecamer of 8 large chains and 8 small chains. Mg(2+) is required as a cofactor.

The protein resides in the plastid. It is found in the chloroplast. It catalyses the reaction 2 (2R)-3-phosphoglycerate + 2 H(+) = D-ribulose 1,5-bisphosphate + CO2 + H2O. The enzyme catalyses D-ribulose 1,5-bisphosphate + O2 = 2-phosphoglycolate + (2R)-3-phosphoglycerate + 2 H(+). Functionally, ruBisCO catalyzes two reactions: the carboxylation of D-ribulose 1,5-bisphosphate, the primary event in carbon dioxide fixation, as well as the oxidative fragmentation of the pentose substrate in the photorespiration process. Both reactions occur simultaneously and in competition at the same active site. This Chlorella vulgaris (Green alga) protein is Ribulose bisphosphate carboxylase large chain.